We begin with the raw amino-acid sequence, 289 residues long: Signal peptidase I (289 aa).

The Cytoplasmic portion of the chain corresponds to 1-43 (MKKLTSTTTTLWDNKLFINNLKNFMQTNTESNNNKTTAQEWKS). A helical transmembrane segment spans residues 44–64 (FILVVVIALMIRILIIESFVV). Residues 65–289 (PTGSMKATIL…IFRNLYSIED (225 aa)) lie on the Periplasmic side of the membrane. Active-site residues include S68 and K131.

This sequence belongs to the peptidase S26 family.

The protein localises to the cell inner membrane. It carries out the reaction Cleavage of hydrophobic, N-terminal signal or leader sequences from secreted and periplasmic proteins.. The polypeptide is Signal peptidase I (lepB) (Rickettsia bellii (strain OSU 85-389)).